Reading from the N-terminus, the 476-residue chain is 3-isopropylmalate dehydratase large subunit (476 aa).

Residues cysteine 357, cysteine 417, and cysteine 420 each coordinate [4Fe-4S] cluster.

It belongs to the aconitase/IPM isomerase family. LeuC type 1 subfamily. In terms of assembly, heterodimer of LeuC and LeuD. [4Fe-4S] cluster is required as a cofactor.

It carries out the reaction (2R,3S)-3-isopropylmalate = (2S)-2-isopropylmalate. It participates in amino-acid biosynthesis; L-leucine biosynthesis; L-leucine from 3-methyl-2-oxobutanoate: step 2/4. Its function is as follows. Catalyzes the isomerization between 2-isopropylmalate and 3-isopropylmalate, via the formation of 2-isopropylmaleate. The sequence is that of 3-isopropylmalate dehydratase large subunit from Mycobacterium avium (strain 104).